We begin with the raw amino-acid sequence, 484 residues long: Aspartyl/glutamyl-tRNA(Asn/Gln) amidotransferase subunit B (484 aa).

Belongs to the GatB/GatE family. GatB subfamily. Heterotrimer of A, B and C subunits.

It catalyses the reaction L-glutamyl-tRNA(Gln) + L-glutamine + ATP + H2O = L-glutaminyl-tRNA(Gln) + L-glutamate + ADP + phosphate + H(+). The catalysed reaction is L-aspartyl-tRNA(Asn) + L-glutamine + ATP + H2O = L-asparaginyl-tRNA(Asn) + L-glutamate + ADP + phosphate + 2 H(+). Allows the formation of correctly charged Asn-tRNA(Asn) or Gln-tRNA(Gln) through the transamidation of misacylated Asp-tRNA(Asn) or Glu-tRNA(Gln) in organisms which lack either or both of asparaginyl-tRNA or glutaminyl-tRNA synthetases. The reaction takes place in the presence of glutamine and ATP through an activated phospho-Asp-tRNA(Asn) or phospho-Glu-tRNA(Gln). The polypeptide is Aspartyl/glutamyl-tRNA(Asn/Gln) amidotransferase subunit B (Bordetella bronchiseptica (strain ATCC BAA-588 / NCTC 13252 / RB50) (Alcaligenes bronchisepticus)).